Reading from the N-terminus, the 304-residue chain is Acetylglutamate kinase (304 aa).

Residues G70 to G71, R92, and N185 contribute to the substrate site.

Belongs to the acetylglutamate kinase family. ArgB subfamily.

It is found in the cytoplasm. The enzyme catalyses N-acetyl-L-glutamate + ATP = N-acetyl-L-glutamyl 5-phosphate + ADP. Its pathway is amino-acid biosynthesis; L-arginine biosynthesis; N(2)-acetyl-L-ornithine from L-glutamate: step 2/4. Functionally, catalyzes the ATP-dependent phosphorylation of N-acetyl-L-glutamate. The chain is Acetylglutamate kinase from Paracoccus denitrificans (strain Pd 1222).